A 518-amino-acid polypeptide reads, in one-letter code: ATP synthase subunit alpha (518 aa).

Position 170-177 (170-177 (GDRQTGKT)) interacts with ATP.

It belongs to the ATPase alpha/beta chains family. F-type ATPases have 2 components, CF(1) - the catalytic core - and CF(0) - the membrane proton channel. CF(1) has five subunits: alpha(3), beta(3), gamma(1), delta(1), epsilon(1). CF(0) has three main subunits: a(1), b(2) and c(9-12). The alpha and beta chains form an alternating ring which encloses part of the gamma chain. CF(1) is attached to CF(0) by a central stalk formed by the gamma and epsilon chains, while a peripheral stalk is formed by the delta and b chains.

It localises to the cell membrane. It catalyses the reaction ATP + H2O + 4 H(+)(in) = ADP + phosphate + 5 H(+)(out). In terms of biological role, produces ATP from ADP in the presence of a proton gradient across the membrane. The alpha chain is a regulatory subunit. The sequence is that of ATP synthase subunit alpha from Mycoplasmoides gallisepticum (strain R(low / passage 15 / clone 2)) (Mycoplasma gallisepticum).